The primary structure comprises 368 residues: S-adenosylmethionine decarboxylase proenzyme (368 aa).

Active-site residues include Glu26 and Glu29. Ser83 (schiff-base intermediate with substrate; via pyruvic acid) is an active-site residue. Ser83 bears the Pyruvic acid (Ser); by autocatalysis mark. The Proton donor; for catalytic activity role is filled by Cys97. Residues Ser246 and His261 each act as proton acceptor; for processing activity in the active site.

It belongs to the eukaryotic AdoMetDC family. Heterotetramer of two alpha and two beta chains. Pyruvate serves as cofactor. Post-translationally, is synthesized initially as an inactive proenzyme. Formation of the active enzyme involves a self-maturation process in which the active site pyruvoyl group is generated from an internal serine residue via an autocatalytic post-translational modification. Two non-identical subunits are generated from the proenzyme in this reaction, and the pyruvate is formed at the N-terminus of the alpha chain, which is derived from the carboxyl end of the proenzyme. The post-translation cleavage follows an unusual pathway, termed non-hydrolytic serinolysis, in which the side chain hydroxyl group of the serine supplies its oxygen atom to form the C-terminus of the beta chain, while the remainder of the serine residue undergoes an oxidative deamination to produce ammonia and the pyruvoyl group blocking the N-terminus of the alpha chain.

It carries out the reaction S-adenosyl-L-methionine + H(+) = S-adenosyl 3-(methylsulfanyl)propylamine + CO2. The protein operates within amine and polyamine biosynthesis; S-adenosylmethioninamine biosynthesis; S-adenosylmethioninamine from S-adenosyl-L-methionine: step 1/1. In terms of biological role, essential for biosynthesis of the polyamines spermidine and spermine. Polyamines are essential for cell proliferation and are implicated in cellular processes, ranging from DNA replication to apoptosis. The chain is S-adenosylmethionine decarboxylase proenzyme from Caenorhabditis elegans.